The chain runs to 476 residues: Stromelysin-2 (476 aa).

The signal sequence occupies residues 1–17 (MMHLAFLVLLCLPVCSA). Positions 18-98 (YPLSGAAKEE…PRCGVPDVGH (81 aa)) are cleaved as a propeptide — activation peptide. Residues 89 to 96 (PRCGVPDV) carry the Cysteine switch motif. Cys-91, His-167, Asp-169, His-182, His-195, and His-217 together coordinate Zn(2+). The active site involves Glu-218. The Zn(2+) site is built by His-221 and His-227. Hemopexin repeat units follow at residues 286-335 (PAKC…WPSL), 336-382 (PSYL…GFPP), 384-432 (IRKI…FPGV), and 433-476 (EPKV…WLHC). Cys-289 and Cys-476 form a disulfide bridge.

The protein belongs to the peptidase M10A family. It depends on Zn(2+) as a cofactor. Ca(2+) is required as a cofactor.

The protein resides in the secreted. It localises to the extracellular space. The protein localises to the extracellular matrix. It carries out the reaction Similar to stromelysin 1, but action on collagen types III, IV and V is weak.. Its function is as follows. Can degrade fibronectin, gelatins of type I, III, IV, and V; weakly collagens III, IV, and V. Activates procollagenase. The protein is Stromelysin-2 (MMP10) of Homo sapiens (Human).